A 206-amino-acid chain; its full sequence is Large ribosomal subunit protein uL13x (206 aa).

This sequence belongs to the universal ribosomal protein uL13 family.

The protein is Large ribosomal subunit protein uL13x (RPL13AC) of Arabidopsis thaliana (Mouse-ear cress).